The primary structure comprises 410 residues: LL-diaminopimelate aminotransferase (410 aa).

Substrate is bound by residues Tyr-15 and Gly-42. Pyridoxal 5'-phosphate contacts are provided by residues Tyr-72, 108–109 (SK), Tyr-132, Asn-187, Tyr-218, and 246–248 (SFS). Substrate-binding residues include Lys-109, Tyr-132, and Asn-187. Lys-249 carries the post-translational modification N6-(pyridoxal phosphate)lysine. Positions 257 and 292 each coordinate pyridoxal 5'-phosphate. Positions 292 and 388 each coordinate substrate.

Belongs to the class-I pyridoxal-phosphate-dependent aminotransferase family. LL-diaminopimelate aminotransferase subfamily. In terms of assembly, homodimer. Pyridoxal 5'-phosphate is required as a cofactor.

The enzyme catalyses (2S,6S)-2,6-diaminopimelate + 2-oxoglutarate = (S)-2,3,4,5-tetrahydrodipicolinate + L-glutamate + H2O + H(+). It functions in the pathway amino-acid biosynthesis; L-lysine biosynthesis via DAP pathway; LL-2,6-diaminopimelate from (S)-tetrahydrodipicolinate (aminotransferase route): step 1/1. In terms of biological role, involved in the synthesis of meso-diaminopimelate (m-DAP or DL-DAP), required for both lysine and peptidoglycan biosynthesis. Catalyzes the direct conversion of tetrahydrodipicolinate to LL-diaminopimelate. This is LL-diaminopimelate aminotransferase from Geobacter sulfurreducens (strain ATCC 51573 / DSM 12127 / PCA).